A 460-amino-acid polypeptide reads, in one-letter code: Cysteine--tRNA ligase (460 aa).

C28 provides a ligand contact to Zn(2+). The 'HIGH' region motif lies at 30–40; the sequence is MTVYDYCHLGH. Residues C209, H234, and E238 each contribute to the Zn(2+) site. The short motif at 266 to 270 is the 'KMSKS' region element; that stretch reads KMSKS. K269 contacts ATP.

The protein belongs to the class-I aminoacyl-tRNA synthetase family. In terms of assembly, monomer. The cofactor is Zn(2+).

It is found in the cytoplasm. The enzyme catalyses tRNA(Cys) + L-cysteine + ATP = L-cysteinyl-tRNA(Cys) + AMP + diphosphate. The chain is Cysteine--tRNA ligase from Pseudomonas aeruginosa (strain UCBPP-PA14).